Consider the following 440-residue polypeptide: Beta-1,3-galactosyl-O-glycosyl-glycoprotein beta-1,6-N-acetylglucosaminyltransferase (440 aa).

Residues 1–12 are Cytoplasmic-facing; that stretch reads MKMAGWKKKLCR. A helical; Signal-anchor for type II membrane protein membrane pass occupies residues 13–30; that stretch reads GHHLWALGCYMLLAVVSL. Over 31 to 440 the chain is Lumenal; it reads RLSLRFKCDV…RHKAIYGTEL (410 aa). N-linked (GlcNAc...) asparagine; by host glycosylation is found at Asn72 and Asn108. 4 disulfide bridges follow: Cys73-Cys230, Cys164-Cys384, Cys185-Cys212, and Cys393-Cys425.

It belongs to the glycosyltransferase 14 family.

The protein resides in the host Golgi apparatus membrane. The enzyme catalyses a 3-O-[beta-D-galactosyl-(1-&gt;3)-N-acetyl-alpha-D-galactosaminyl]-L-seryl-[protein] + UDP-N-acetyl-alpha-D-glucosamine = 3-O-{beta-D-galactosyl-(1-&gt;3)-[N-acetyl-beta-D-glucosaminyl-(1-&gt;6)]-N-acetyl-alpha-D-galactosaminyl}-L-seryl-[protein] + UDP + H(+). It catalyses the reaction a 3-O-[beta-D-galactosyl-(1-&gt;3)-N-acetyl-alpha-D-galactosaminyl]-L-threonyl-[protein] + UDP-N-acetyl-alpha-D-glucosamine = a 3-O-{beta-D-galactosyl-(1-&gt;3)-[N-acetyl-beta-D-glucosaminyl-(1-&gt;6)]-N-acetyl-alpha-D-galactosaminyl}-L-threonyl-[protein] + UDP + H(+). It carries out the reaction a beta-D-Gal-(1-&gt;4)-beta-D-GlcNAc-(1-&gt;3)-beta-D-Gal-(1-&gt;4)-beta-D-GlcNAc derivative + UDP-N-acetyl-alpha-D-glucosamine = a beta-D-Gal-(1-&gt;4)-beta-D-GlcNAc-(1-&gt;3)-[beta-D-GlcNAc-(1-&gt;6)]-beta-D-Gal-(1-&gt;4)-N-acetyl-beta-D-glucosaminyl derivative + UDP + H(+). The catalysed reaction is 3-O-[N-acetyl-beta-D-glucosaminyl-(1-&gt;3)-N-acetyl-alpha-D-galactosaminyl]-L-seryl-[protein] + UDP-N-acetyl-alpha-D-glucosamine = 3-O-[N-acetyl-beta-D-glucosaminyl-(1-&gt;3)-[N-acetyl-beta-D-glucosaminyl-(1-&gt;6)]-N-acetyl-alpha-D-galactosaminyl]-L-seryl-[protein] + UDP + H(+). The enzyme catalyses a 3-O-[N-acetyl-beta-D-glucosaminyl-(1-&gt;3)-N-acetyl-alpha-D-galactosaminyl]-L-threonyl-[protein] + UDP-N-acetyl-alpha-D-glucosamine = 3-O-[N-acetyl-beta-D-glucosaminyl-(1-&gt;3)-[N-acetyl-beta-D-glucosaminyl-(1-&gt;6)]-N-acetyl-alpha-D-galactosaminyl]-L-threonyl-[protein] + UDP + H(+). The protein operates within protein modification; protein glycosylation. In terms of biological role, non-essential glycosyltransferase that can synthesize all known mucin beta 6 N-acetylglucosaminides. Mediates core 2 and core 4 O-glycan branching, 2 important steps in mucin-type biosynthesis. Has also I-branching enzyme activity by converting linear into branched poly-N-acetyllactosaminoglycans. Contributes to the post-translational modifications of structural proteins. The chain is Beta-1,3-galactosyl-O-glycosyl-glycoprotein beta-1,6-N-acetylglucosaminyltransferase (Bo17) from Bos taurus (Bovine).